The chain runs to 104 residues: uncharacterized protein (104 aa).

The helical transmembrane segment at 80–98 (GSSLPLFDLVFILLSTFFL) threads the bilayer.

Its subcellular location is the membrane. This is an uncharacterized protein from Saccharomyces cerevisiae (strain ATCC 204508 / S288c) (Baker's yeast).